The sequence spans 37 residues: Cytochrome b6-f complex subunit 7 (37 aa).

The chain crosses the membrane as a helical span at residues 11-29; the sequence is AVILMVLVLFGLAWGFLIL.

Belongs to the PetM family. As to quaternary structure, the 4 large subunits of the cytochrome b6-f complex are cytochrome b6, subunit IV (17 kDa polypeptide, PetD), cytochrome f and the Rieske protein, while the 4 small subunits are PetG, PetL, PetM and PetN. The complex functions as a dimer.

The protein resides in the cellular thylakoid membrane. Its function is as follows. Component of the cytochrome b6-f complex, which mediates electron transfer between photosystem II (PSII) and photosystem I (PSI), cyclic electron flow around PSI, and state transitions. The sequence is that of Cytochrome b6-f complex subunit 7 from Crocosphaera subtropica (strain ATCC 51142 / BH68) (Cyanothece sp. (strain ATCC 51142)).